A 304-amino-acid polypeptide reads, in one-letter code: MVVLDQPAQSGMVVALQANYLEVELDQVSELIPSRLLCTRRTRLSHRGEAVYVGDRVRVEAIDVSHARAVVADVEPRVSFLTRPPVANASTVVVALAVDQPAFDPDQASRFLLTAERTSLAVQLVLTKTDLLEPEALERLRVRLQAWGYPPLLVSTFSGLGLSELKQRLAESSLSVLCGPSGVGKSSLLNALIPELDLRIGSVSGRLQRGRHTTRHVELHHLGAKARVADTPGFNRPDLPDDPRNLEVLFPELRVQLEQHPCRFRDCLHRDEPGCGVTRDWERYPIYRRAVEDLLGLSRPSRGG.

The CP-type G domain maps to 78 to 237 (VSFLTRPPVA…VADTPGFNRP (160 aa)). Residues 127 to 130 (TKTD) and 179 to 187 (GPSGVGKSS) contribute to the GTP site. Residues C262, C267, H269, and C275 each coordinate Zn(2+).

The protein belongs to the TRAFAC class YlqF/YawG GTPase family. RsgA subfamily. As to quaternary structure, monomer. Associates with 30S ribosomal subunit, binds 16S rRNA. It depends on Zn(2+) as a cofactor.

It is found in the cytoplasm. In terms of biological role, one of several proteins that assist in the late maturation steps of the functional core of the 30S ribosomal subunit. Helps release RbfA from mature subunits. May play a role in the assembly of ribosomal proteins into the subunit. Circularly permuted GTPase that catalyzes slow GTP hydrolysis, GTPase activity is stimulated by the 30S ribosomal subunit. In Synechococcus sp. (strain CC9311), this protein is Small ribosomal subunit biogenesis GTPase RsgA.